The primary structure comprises 221 residues: Large ribosomal subunit protein uL3 (221 aa).

This sequence belongs to the universal ribosomal protein uL3 family. Part of the 50S ribosomal subunit. Forms a cluster with proteins L14 and L19.

Its function is as follows. One of the primary rRNA binding proteins, it binds directly near the 3'-end of the 23S rRNA, where it nucleates assembly of the 50S subunit. The protein is Large ribosomal subunit protein uL3 of Chlamydia felis (strain Fe/C-56) (Chlamydophila felis).